Consider the following 298-residue polypeptide: Mimecan (298 aa).

An N-terminal signal peptide occupies residues Met1 to Gln19. Asn88 carries N-linked (GlcNAc...) (keratan sulfate) asparagine glycosylation. 7 LRR repeats span residues Asp112–Ile131, Lys132–Ile155, Glu156–Leu179, Leu180–Ile199, Lys200–Leu225, Glu226–Ile246, and Ser247–Ile277. The cysteines at positions 255 and 288 are disulfide-linked. Asn258 carries an N-linked (GlcNAc...) (keratan sulfate) asparagine glycan.

The protein belongs to the small leucine-rich proteoglycan (SLRP) family. SLRP class III subfamily. Contains keratan sulfate.

It is found in the secreted. Its subcellular location is the extracellular space. It localises to the extracellular matrix. In terms of biological role, induces bone formation in conjunction with TGF-beta-1 or TGF-beta-2. The protein is Mimecan (Ogn) of Mus musculus (Mouse).